The sequence spans 111 residues: Putative lipid-binding protein AIR1 (111 aa).

Residues 1–23 (MAPRTPLALFVSLNLLFFTYTSA) form the signal peptide. 3 cysteine pairs are disulfide-bonded: Cys28-Cys58, Cys38-Cys57, and Cys74-Cys110.

The protein belongs to the plant LTP family. PEARLI1 subfamily.

The protein localises to the secreted. This chain is Putative lipid-binding protein AIR1 (AIR1), found in Arabidopsis thaliana (Mouse-ear cress).